The sequence spans 485 residues: E-selectin (485 aa).

The signal sequence occupies residues 1–22; it reads MIVSQYLSALTFVLLLFKESRT. Residues 23–140 form the C-type lectin domain; it reads WSYHASTEMM…CTKQKLALCY (118 aa). Residues 23–430 are Extracellular-facing; it reads WSYHASTEMM…CEAPTVSQTP (408 aa). Cystine bridges form between cysteine 41-cysteine 139, cysteine 112-cysteine 131, cysteine 144-cysteine 155, cysteine 149-cysteine 164, cysteine 166-cysteine 175, cysteine 181-cysteine 224, cysteine 194-cysteine 206, cysteine 210-cysteine 237, cysteine 242-cysteine 286, cysteine 255-cysteine 268, cysteine 272-cysteine 299, cysteine 304-cysteine 349, cysteine 335-cysteine 362, cysteine 367-cysteine 408, and cysteine 394-cysteine 421. Residues asparagine 61, asparagine 79, and asparagine 88 are each glycosylated (N-linked (GlcNAc...) asparagine). Ca(2+)-binding residues include glutamate 102, asparagine 104, and glutamate 110. A carbohydrate-binding positions include 102–110, 114–119, and 127–129; these read EPNNKQSDE, EIYIKR, and NDE. Ca(2+)-binding residues include asparagine 127 and aspartate 128. In terms of domain architecture, EGF-like spans 141 to 176; the sequence is KAACNPTPCGSHGECVETINNYTCQCHPGFKGLKCE. N-linked (GlcNAc...) asparagine glycosylation occurs at asparagine 161. 4 Sushi domains span residues 179–239, 240–301, 302–364, and 365–423; these read VTCP…KCNV, VKCD…TCKA, VSCA…VCEV, and VRCS…TCEA. The N-linked (GlcNAc...) asparagine glycan is linked to asparagine 203. Asparagine 265 is a glycosylation site (N-linked (GlcNAc...) asparagine). Asparagine 312 and asparagine 316 each carry an N-linked (GlcNAc...) asparagine glycan. N-linked (GlcNAc...) asparagine glycans are attached at residues asparagine 379 and asparagine 401. The chain crosses the membrane as a helical span at residues 431 to 453; it reads LAVGLSTAGVSLVTIPSFLFWLL. Topologically, residues 454 to 485 are cytoplasmic; it reads KRLQKKAKKFSPASSCSSLKSNGCYSTPSKLI. The tract at residues 466–485 is disordered; the sequence is ASSCSSLKSNGCYSTPSKLI.

The protein belongs to the selectin/LECAM family. In terms of assembly, interacts with SELPLG/PSGL1 and PODXL2 through the sialyl Lewis X epitope. SELPLG sulfation appears not to be required for this interaction.

The protein localises to the cell membrane. In terms of biological role, cell-surface glycoprotein having a role in immunoadhesion. Mediates in the adhesion of blood neutrophils in cytokine-activated endothelium through interaction with SELPLG/PSGL1. May have a role in capillary morphogenesis. In Bos taurus (Bovine), this protein is E-selectin (SELE).